We begin with the raw amino-acid sequence, 377 residues long: Protein-tyrosine sulfotransferase 2 (377 aa).

The Cytoplasmic segment spans residues 1–8 (MRLSVRRV). A helical; Signal-anchor for type II membrane protein transmembrane segment spans residues 9-25 (LLAAGCALVLVLAVQLG). The Lumenal portion of the chain corresponds to 26 to 377 (QQVLECRAVL…NSTSSHLGSS (352 aa)). 3'-phosphoadenylyl sulfate is bound at residue 78–82 (RSGTT). A disulfide bridge connects residues Cys96 and Cys156. Catalysis depends on Glu99, which acts as the Proton donor/acceptor. The tract at residues 101–105 (RIIPR) is interaction with peptide substrate. Residues Arg183, Ser191, and Arg195 each coordinate 3'-phosphoadenylyl sulfate. Cys225 and Cys233 are joined by a disulfide. 3'-phosphoadenylyl sulfate-binding positions include Tyr238, 285-294 (STDQVIKPVN), and Lys300. N-linked (GlcNAc...) asparagine glycans are attached at residues Asn343 and Asn368.

Belongs to the protein sulfotransferase family. Homodimer. Can also form heterodimers with TPST1. Post-translationally, N-glycosylated. Widely expressed.

Its subcellular location is the golgi apparatus membrane. It catalyses the reaction L-tyrosyl-[protein] + 3'-phosphoadenylyl sulfate = O-sulfo-L-tyrosine-[protein] + adenosine 3',5'-bisphosphate + H(+). Catalyzes the O-sulfation of tyrosine residues within acidic motifs of polypeptides, using 3'-phosphoadenylyl sulfate (PAPS) as cosubstrate. The polypeptide is Protein-tyrosine sulfotransferase 2 (TPST2) (Homo sapiens (Human)).